A 396-amino-acid polypeptide reads, in one-letter code: Apolipoprotein A-IV (396 aa).

The first 20 residues, 1-20 (MFLKAVVLTLALVAVAGARA), serve as a signal peptide directing secretion. Tandem repeats lie at residues 33-54 (DYFS…KSEL), 60-81 (ALFQ…KKLV), 82-103 (PFAT…EEIG), 115-136 (PHAN…QRLE), 137-158 (PYAD…RQLT), 159-180 (PYAQ…ASLR), 181-202 (PHAD…GRLT), 203-224 (PYAD…RSLA), 225-246 (PYAQ…FQMK), 247-268 (KNAE…QRLA), 269-286 (PLAE…EGLQ), 287-308 (KSLA…RRVE), and 309-330 (PYGE…QKLG). The 13 X 22 AA approximate tandem repeats stretch occupies residues 33-330 (DYFSQLSNNA…QMEQLRQKLG (298 aa)). A disordered region spans residues 361 to 396 (KESQDKTLSLPELEQQQEQQQEQQQEQVQMLAPLES). Low complexity predominate over residues 374 to 389 (EQQQEQQQEQQQEQVQ).

Belongs to the apolipoprotein A1/A4/E family. Homodimer. Phosphorylation sites are present in the extracellular medium. As to expression, synthesized primarily in the intestine and secreted in plasma.

It localises to the secreted. In terms of biological role, may have a role in chylomicrons and VLDL secretion and catabolism. Required for efficient activation of lipoprotein lipase by ApoC-II; potent activator of LCAT. Apoa-IV is a major component of HDL and chylomicrons. The polypeptide is Apolipoprotein A-IV (Homo sapiens (Human)).